The chain runs to 101 residues: Small ribosomal subunit protein uS14 (101 aa).

Belongs to the universal ribosomal protein uS14 family. In terms of assembly, part of the 30S ribosomal subunit. Contacts proteins S3 and S10.

Binds 16S rRNA, required for the assembly of 30S particles and may also be responsible for determining the conformation of the 16S rRNA at the A site. This chain is Small ribosomal subunit protein uS14, found in Bordetella parapertussis (strain 12822 / ATCC BAA-587 / NCTC 13253).